A 182-amino-acid polypeptide reads, in one-letter code: Dual-action ribosomal maturation protein DarP (182 aa).

The protein belongs to the DarP family.

The protein localises to the cytoplasm. Member of a network of 50S ribosomal subunit biogenesis factors which assembles along the 30S-50S interface, preventing incorrect 23S rRNA structures from forming. Promotes peptidyl transferase center (PTC) maturation. The protein is Dual-action ribosomal maturation protein DarP of Serratia proteamaculans (strain 568).